Here is a 1216-residue protein sequence, read N- to C-terminus: DNA polymerase subunit gamma-1 (1216 aa).

A compositionally biased stretch (low complexity) spans 27-37; that stretch reads SSSVLDPVPSD. A disordered region spans residues 27-50; the sequence is SSSVLDPVPSDGQPQSQMPSSENG. Positions 38–50 are enriched in polar residues; the sequence is GQPQSQMPSSENG. The Exo I motif lies at 179-183; it reads VFDVE. The active-site Exonuclease activity is Asp181. Positions 250–258 match the Exo II motif; it reads VGHNVSFDR. Ser289 serves as a coordination point for DNA. Positions 301 to 314 are enriched in basic residues; the sequence is GKHKTQHPTKRGQK. Positions 301-321 are disordered; the sequence is GKHKTQHPTKRGQKSQKNANG. The Exo III motif lies at 377-385; the sequence is YCARDVWAT. The disordered stretch occupies residues 488 to 518; it reads TASASKLPIEGAGPFGDPMDQEDPGPPSEEE. Residues 491–552 are accessory-interacting determinant; the sequence is ASKLPIEGAG…RPQHLPGHPG (62 aa). Over residues 506-518 the composition is skewed to acidic residues; sequence MDQEDPGPPSEEE. Arg560 provides a ligand contact to RNA. Residue Ser574 participates in DNA binding. Positions 731, 740, and 745 each coordinate RNA. The DNA site is built by Lys783 and Thr826. A trigger loop region spans residues 835–841; it reads TWLTASN. Ser840 and Arg846 together coordinate RNA. The Pol A signature appears at 864–873; the sequence is VGADVDSQEL. The a 2'-deoxyribonucleoside 5'-triphosphate site is built by Asp867, Val868, Ser870, Glu872, Arg920, Lys924, and Tyr928. Mg(2+)-binding residues include Asp867 and Val868. The Pol B signature appears at 920 to 935; that stretch reads REHAKVFNYGRIYGAG. Positions 1071 and 1072 each coordinate DNA. The Pol C motif lies at 1111 to 1118; that stretch reads HDEVRYLV. Asp1112 contributes to the a 2'-deoxyribonucleoside 5'-triphosphate binding site. Mg(2+) is bound at residue Asp1112.

The protein belongs to the DNA polymerase type-A family. In terms of assembly, heterotrimer composed of a catalytic subunit and a homodimer of accessory subunits (POLG:POLG2). Interacts with TTC3. Interacts with LIG3. Mg(2+) serves as cofactor.

The protein localises to the mitochondrion. It localises to the mitochondrion matrix. Its subcellular location is the mitochondrion nucleoid. It catalyses the reaction DNA(n) + a 2'-deoxyribonucleoside 5'-triphosphate = DNA(n+1) + diphosphate. It carries out the reaction a 3'-end 2'-deoxyribonucleotidyl-deoxyribonucleotide-DNA + H2O = a 3'-end 2'-deoxyribonucleotide-DNA + a 2'-deoxyribonucleoside 5'-phosphate + H(+). The enzyme catalyses a 5'-end 2'-deoxyribose-2'-deoxyribonucleotide-DNA = (2E,4S)-4-hydroxypenten-2-al-5-phosphate + a 5'-end 5'-phospho-2'-deoxyribonucleoside-DNA + H(+). Its activity is regulated as follows. Inhibited by dideoxynucleotides such as antiviral agent zalcitabine. Catalytic subunit of DNA polymerase gamma solely responsible for replication of mitochondrial DNA (mtDNA). Replicates both heavy and light strands of the circular mtDNA genome using a single-stranded DNA template, RNA primers and the four deoxyribonucleoside triphosphates as substrates. Has 5' -&gt; 3' polymerase activity. Functionally interacts with TWNK and SSBP1 at the replication fork to form a highly processive replisome, where TWNK unwinds the double-stranded DNA template prior to replication and SSBP1 covers the parental heavy strand to enable continuous replication of the entire mitochondrial genome. A single nucleotide incorporation cycle includes binding of the incoming nucleotide at the insertion site, a phosphodiester bond formation reaction that extends the 3'-end of the primer DNA, and translocation of the primer terminus to the post-insertion site. After completing replication of a mtDNA strand, mediates 3' -&gt; 5' exonucleolytic degradation at the nick to enable proper ligation. Highly accurate due to high nucleotide selectivity and 3' -&gt; 5' exonucleolytic proofreading. Proficiently corrects base substitutions, single-base additions and deletions in non-repetitive sequences and short repeats, but displays lower proofreading activity when replicating longer homopolymeric stretches. Exerts exonuclease activity toward single-stranded DNA and double-stranded DNA containing 3'-terminal mispairs. When a misincorporation occurs, transitions from replication to a pro-nucleolytic editing mode and removes the missincorporated nucleoside in the exonuclease active site. Proceeds via an SN2 nucleolytic mechanism in which Asp-198 catalyzes phosphodiester bond hydrolysis and Glu-200 stabilizes the leaving group. As a result the primer strand becomes one nucleotide shorter and is positioned in the post-insertion site, ready to resume DNA synthesis. Exerts 5'-deoxyribose phosphate (dRP) lyase activity and mediates repair-associated mtDNA synthesis (gap filling) in base-excision repair pathway. Catalyzes the release of the 5'-terminal 2-deoxyribose-5-phosphate sugar moiety from incised apurinic/apyrimidinic (AP) sites to produce a substrate for DNA ligase. The dRP lyase reaction does not require divalent metal ions and likely proceeds via a Schiff base intermediate in a beta-elimination reaction mechanism. In Rattus norvegicus (Rat), this protein is DNA polymerase subunit gamma-1.